We begin with the raw amino-acid sequence, 827 residues long: ADP-ribosylation factor GTPase-activating protein AGD3 (827 aa).

The BAR domain maps to M1–Q225. 2 coiled-coil regions span residues H116–F139 and A223–R253. A disordered region spans residues R246–Q269. The span at G255–G267 shows a compositional bias: low complexity. In terms of domain architecture, PH spans Q292–A430. The disordered stretch occupies residues E439 to D467. Phosphoserine is present on S445. Residues E501 to D643 enclose the Arf-GAP domain. The segment at C516–C539 adopts a C4-type zinc-finger fold. 3 ANK repeats span residues G728 to A757, S761 to A790, and E794 to R825.

In terms of assembly, homodimer. Interacts with DRP1A. Interacts with VAB. In terms of tissue distribution, broadly expressed. Detected in developing veins of the leaf and root. Detected in roots, hypocotyls, cotyledons, leaves, siliques and shoot apical meristems.

The protein localises to the golgi apparatus. Its subcellular location is the trans-Golgi network. Its activity is regulated as follows. ARF GAP activity strongly enhanced by phosphatidylinositol 4-monophosphate (PIP) and moderately enhanced by phosphatidylinositol 4,5-bisphosphate (PIP2). Functionally, GTPase-activating protein (GAP) for ADP ribosylation factor (ARF). Involved in the spatial control of provascular differentiation. Required for the formation of the normal pattern of continuous secondary veins. Involved in auxin signaling but not in polar auxin transport or in auxin responses. Required for PIN1 internalization in roots. This Arabidopsis thaliana (Mouse-ear cress) protein is ADP-ribosylation factor GTPase-activating protein AGD3 (AGD3).